A 274-amino-acid polypeptide reads, in one-letter code: 2,3,4,5-tetrahydropyridine-2,6-dicarboxylate N-succinyltransferase (274 aa).

This sequence belongs to the transferase hexapeptide repeat family.

It is found in the cytoplasm. The catalysed reaction is (S)-2,3,4,5-tetrahydrodipicolinate + succinyl-CoA + H2O = (S)-2-succinylamino-6-oxoheptanedioate + CoA. It functions in the pathway amino-acid biosynthesis; L-lysine biosynthesis via DAP pathway; LL-2,6-diaminopimelate from (S)-tetrahydrodipicolinate (succinylase route): step 1/3. The sequence is that of 2,3,4,5-tetrahydropyridine-2,6-dicarboxylate N-succinyltransferase from Escherichia coli (strain SMS-3-5 / SECEC).